Consider the following 120-residue polypeptide: UPF0145 protein UNCMA_30400 (120 aa).

This sequence belongs to the UPF0145 family.

The chain is UPF0145 protein UNCMA_30400 from Methanocella arvoryzae (strain DSM 22066 / NBRC 105507 / MRE50).